A 185-amino-acid polypeptide reads, in one-letter code: MINEIKKDTQLRMEKSLETFKNHIAKVRTGRAQPSLLDGIQVEYYGSPTPLRQLANVVAEDARTLAVTVFDRSLISAVEKAILTSDLGLNPSSAGTTIRVPLPPLTEERRRDLIKIVKGEAEQGKIAVRNVRRDANDQIKALLKDKEISEDEERKAQDEIQKITDTFVKKVDEVLADKEKELLDF.

Belongs to the RRF family.

The protein resides in the cytoplasm. Its function is as follows. Responsible for the release of ribosomes from messenger RNA at the termination of protein biosynthesis. May increase the efficiency of translation by recycling ribosomes from one round of translation to another. This chain is Ribosome-recycling factor, found in Pasteurella multocida (strain Pm70).